The following is a 308-amino-acid chain: Eugenol synthase 1 (308 aa).

Residues T13–I16, V35–K45, R36, Q86–Q88, S111–F113, K133, and N153–F155 contribute to the NADP(+) site. K133 acts as the Proton donor/acceptor in catalysis.

Belongs to the NmrA-type oxidoreductase family. In flowers, mostly expressed in limbs, and, to a lower extent, in tubes.

It catalyses the reaction eugenol + a carboxylate + NADP(+) = a coniferyl ester + NADPH. The catalysed reaction is eugenol + acetate + NADP(+) = (E)-coniferyl acetate + NADPH. Its pathway is aromatic compound metabolism; phenylpropanoid biosynthesis. In terms of biological role, involved in the biosynthesis of the floral volatile eugenol. Catalyzes the synthesis of the phenylpropene eugenol from coniferyl acetate. Phenylpropenes are produced by plants as defense compounds with antimicrobial and antianimal properties, or as floral attractants of pollinators. The sequence is that of Eugenol synthase 1 from Petunia hybrida (Petunia).